The primary structure comprises 320 residues: Transmembrane protein 41 homolog (320 aa).

Residues 20-72 form a disordered region; the sequence is GRAKALQEHSPDQVATPLLPQVPPQEQQDLNPQQQQQQQQQQQATPQKQAMSA. Positions 43–68 are enriched in low complexity; that stretch reads PQEQQDLNPQQQQQQQQQQQATPQKQ. 6 helical membrane-spanning segments follow: residues 83-103, 141-161, 173-195, 225-242, 245-265, and 289-309; these read VIVAGIFVASLVTMCYVYAIF, VMFGVVVAYVFLQTFAIPGSL, FPIALFLICFCSALGATLCYTLS, LFNYMLFLRMTPILPNWF, LASPVIGVPLHIFALGTFCGV, and FSWTSMGILMACACASLLPGL.

This sequence belongs to the TMEM41 family. In terms of tissue distribution, in embryos, strongly expressed in the nervous system.

Its subcellular location is the membrane. Required in cholinergic neurons, but not in motor neurons, for normal neurotransmitter release by motor neurons. Involved in muscle growth. The chain is Transmembrane protein 41 homolog (stas) from Drosophila melanogaster (Fruit fly).